Consider the following 501-residue polypeptide: Histone deacetylase 19 (501 aa).

Residues 17–329 (RKVCYFYDPE…WCYETGVALG (313 aa)) are histone deacetylase. H149 (proton donor/acceptor) is an active-site residue. Positions 184, 186, and 272 each coordinate Zn(2+). The interval 383-501 (HAPSVPFQER…GAEQAFPPKT (119 aa)) is disordered. The span at 397–407 (ETPEVDEDQED) shows a compositional bias: acidic residues. S416 carries the post-translational modification Phosphoserine. Basic and acidic residues-rich tracts occupy residues 422 to 457 (DDRK…KGCE) and 479 to 488 (ASVKMEEEGT).

The protein belongs to the histone deacetylase family. HD type 1 subfamily. Interacts with SIN3, SAP18 and TPR1. Interacts with CDKE-1, MED14 and LUG. Interacts with TPL. Interacts with AHL22. Zn(2+) is required as a cofactor. Highly expressed in leaves, stems, flowers and young siliques.

It localises to the nucleus. The enzyme catalyses N(6)-acetyl-L-lysyl-[histone] + H2O = L-lysyl-[histone] + acetate. In terms of biological role, responsible for the deacetylation of lysine residues on the N-terminal part of the core histones (H2A, H2B, H3 and H4). Histone deacetylation gives a tag for epigenetic repression and plays an important role in transcriptional regulation, cell cycle progression and developmental events. Histone deacetylases act via the formation of large multiprotein complexes. HDA19 is involved in jasmonic acid and ethylene signaling of pathogen response. Part of a repressor complex including APETALA2 (AP2) and TOPLESS (TPL) that control the expression domains of numerous floral organ identity genes. Involved in negative regulation of salinity stress response. Represses the expression of stress tolerance-related genes, genes coding for late embryogenesis abundant (LEA) proteins that prevent protein aggregation, and positive regulators of abscisic acid (ABA) signaling, such as ABI5 and NAC019. This chain is Histone deacetylase 19, found in Arabidopsis thaliana (Mouse-ear cress).